An 853-amino-acid chain; its full sequence is MSAIENFDAHTPMMQQYLKLKAQHPEILLFYRMGDFYELFYDDAKRASQLLDISLTKRGASAGEPIPMAGIPYHAVENYLAKLVNQGESVAICEQIGDPATSKGPVERKVVRIVTPGTISDEALLQERQDNLLAAIWQDSKGFGYATLDISSGRFRLSEPADRETMAAELQRTNPAELLYAEDFAEMSLIEGRRGLRRRPLWEFEIDTARQQLNLQFGTRDLVGFGVENAPRGLCAAGCLLQYAKDTQRTTLPHIRSITMEREQDSIIMDAATRRNLEITQNLAGGAENTLASVLDCTVTPMGSRMLKRWLHMPVRDTRVLLERQQTIGALQDFTAELQPVLRQVGDLERILARLALRTARPRDLARMRHAFQQLPELRAQLETVDSAPVQALREKMGEFAELRDLLERAIIDTPPVLVRDGGVIASGYNEELDEWRALADGATDYLERLEVRERERTGLDTLKVGFNAVHGYYIQISRGQSHLAPINYMRRQTLKNAERYIIPELKEYEDKVLTSKGKALALEKQLYEELFDLLLPHLEALQQSASALAELDVLVNLAERAYTLNYICPTFIDKPGIRITEGRHPVVEQVLNEPFIANPLNLSPQRRMLIITGPNMGGKSTYMRQTALIALMAYIGSYVPAQKVEIGPIDRIFTRVGAADDLASGRSTFMVEMTETANILHNATEYSLVLMDEIGRGTSTYDGLSLAWACAENLANKIKALTLFATHYFELTQLPEKMEGVANVHLDALEHGDTIAFMHSVQDGAASKSYGLAVAALAGVPKEVIKRARQKLRELESISPNAAATQVDGTQMSLLSVPEETSPAVEALENLDPDSLTPRQALEWIYRLKSLV.

614–621 provides a ligand contact to ATP; the sequence is GPNMGGKS.

The protein belongs to the DNA mismatch repair MutS family.

This protein is involved in the repair of mismatches in DNA. It is possible that it carries out the mismatch recognition step. This protein has a weak ATPase activity. This chain is DNA mismatch repair protein MutS, found in Escherichia coli (strain SE11).